The chain runs to 140 residues: Nucleoside diphosphate kinase (140 aa).

Lys-11, Phe-59, Arg-87, Thr-93, Arg-104, and Asn-114 together coordinate ATP. His-117 serves as the catalytic Pros-phosphohistidine intermediate.

It belongs to the NDK family. Homotetramer. The cofactor is Mg(2+).

The protein localises to the cytoplasm. It carries out the reaction a 2'-deoxyribonucleoside 5'-diphosphate + ATP = a 2'-deoxyribonucleoside 5'-triphosphate + ADP. It catalyses the reaction a ribonucleoside 5'-diphosphate + ATP = a ribonucleoside 5'-triphosphate + ADP. In terms of biological role, major role in the synthesis of nucleoside triphosphates other than ATP. The ATP gamma phosphate is transferred to the NDP beta phosphate via a ping-pong mechanism, using a phosphorylated active-site intermediate. The polypeptide is Nucleoside diphosphate kinase (Rhodopseudomonas palustris (strain BisB18)).